The chain runs to 332 residues: Glycerol-3-phosphate dehydrogenase [NAD(P)+] (332 aa).

Residues Trp11, Arg30, and Lys108 each contribute to the NADPH site. Sn-glycerol 3-phosphate is bound by residues Lys108, Gly137, and Ser139. Ala141 serves as a coordination point for NADPH. Sn-glycerol 3-phosphate contacts are provided by Lys192, Asp245, Ser255, Arg256, and Asn257. The active-site Proton acceptor is Lys192. Residue Arg256 participates in NADPH binding. Residues Val280 and Glu282 each coordinate NADPH.

Belongs to the NAD-dependent glycerol-3-phosphate dehydrogenase family.

Its subcellular location is the cytoplasm. The catalysed reaction is sn-glycerol 3-phosphate + NAD(+) = dihydroxyacetone phosphate + NADH + H(+). It catalyses the reaction sn-glycerol 3-phosphate + NADP(+) = dihydroxyacetone phosphate + NADPH + H(+). It participates in membrane lipid metabolism; glycerophospholipid metabolism. Catalyzes the reduction of the glycolytic intermediate dihydroxyacetone phosphate (DHAP) to sn-glycerol 3-phosphate (G3P), the key precursor for phospholipid synthesis. This Burkholderia lata (strain ATCC 17760 / DSM 23089 / LMG 22485 / NCIMB 9086 / R18194 / 383) protein is Glycerol-3-phosphate dehydrogenase [NAD(P)+].